Here is a 192-residue protein sequence, read N- to C-terminus: Actin, muscle (192 aa).

Belongs to the actin family.

It is found in the cytoplasm. It localises to the cytoskeleton. The catalysed reaction is ATP + H2O = ADP + phosphate + H(+). In terms of biological role, actins are highly conserved proteins that are involved in various types of cell motility and are ubiquitously expressed in all eukaryotic cells. This is Actin, muscle from Chionoecetes opilio (Atlantic snow crab).